The following is an 832-amino-acid chain: Polyphosphoinositide phosphatase (832 aa).

Positions 145–491 (IEKVDLARTF…GDAIALQYGG (347 aa)) constitute an SAC domain.

As to quaternary structure, component of the PI(3,5)P2 regulatory complex. The cofactor is Mg(2+).

Its subcellular location is the cytoplasm. It localises to the vacuole membrane. The enzyme catalyses a 1,2-diacyl-sn-glycero-3-phospho-(1D-myo-inositol-3,5-bisphosphate) + H2O = a 1,2-diacyl-sn-glycero-3-phospho-(1D-myo-inositol-3-phosphate) + phosphate. Its function is as follows. The PI(3,5)P2 regulatory complex regulates both the synthesis and turnover of phosphatidylinositol 3,5-bisphosphate (PtdIns(3,5)P2). In Schizosaccharomyces pombe (strain 972 / ATCC 24843) (Fission yeast), this protein is Polyphosphoinositide phosphatase.